Here is a 24-residue protein sequence, read N- to C-terminus: Pandinin-2 (24 aa).

In terms of assembly, homooligomer. As to expression, expressed by the venom gland.

The protein resides in the secreted. It is found in the target cell membrane. Disrupts cell membranes through formation of pores. Has strong antimicrobial activity against Gram-positive bacteria B.subtilis, S.epidermidis, E.faecalis and S.aureus. Is less active against Gram-negative bacteria P.aeruginosa and E.coli. Also increases efficacy of antibiotics (ampicillin, chloramphenicol, streptomycin, kanamycin, novobiocin) when tested against E.coli, probably by facilitating their incorporation into the bacteria. Possesses antifungal activity against C.albicans and hemolytic activity against human, sheep and pig erythrocytes. The polypeptide is Pandinin-2 (Pandinus imperator (Emperor scorpion)).